Reading from the N-terminus, the 31-residue chain is M-poneritoxin-Nc3b (31 aa).

This sequence belongs to the ponericin-G family. As to expression, expressed by the venom gland.

The protein localises to the secreted. The protein resides in the target cell membrane. Functionally, membrane-perturbating peptide with a few moderate activities. It is insecticidal, since it induces reversible paralysis in insects (L.cuprina) after 1 hour, but fails to kill them. It is also antiparasitic, since it moderately inhibits the larval development of the major pathogenic nematode of ruminants (H.contortus, IC(50)=23.2 uM) and reduces the motility of adult males of the other nematode B.malayi. It does not show antibacterial activity (MIC&gt;40 uM). It is not cytotoxic to HEK293 cells and does not induce hemolysis in human erythrocytes. It does not cause an increase in intracellular calcium concentration on neuronal and epithelial cell lines. This chain is M-poneritoxin-Nc3b, found in Neoponera commutata (Large hunting ant).